Consider the following 445-residue polypeptide: Argininosuccinate synthase (445 aa).

Residues 17–25 (AFSGGLDTS) and alanine 43 contribute to the ATP site. Tyrosine 99 provides a ligand contact to L-citrulline. ATP contacts are provided by glycine 129 and threonine 131. L-aspartate is bound by residues threonine 131, asparagine 135, and aspartate 136. L-citrulline is bound at residue asparagine 135. Aspartate 136 serves as a coordination point for ATP. 2 residues coordinate L-citrulline: arginine 139 and serine 192. An ATP-binding site is contributed by aspartate 194. L-citrulline is bound by residues threonine 201, glutamate 203, and glutamate 280.

Belongs to the argininosuccinate synthase family. Type 2 subfamily. In terms of assembly, homotetramer.

The protein resides in the cytoplasm. It catalyses the reaction L-citrulline + L-aspartate + ATP = 2-(N(omega)-L-arginino)succinate + AMP + diphosphate + H(+). It functions in the pathway amino-acid biosynthesis; L-arginine biosynthesis; L-arginine from L-ornithine and carbamoyl phosphate: step 2/3. This chain is Argininosuccinate synthase, found in Burkholderia ambifaria (strain ATCC BAA-244 / DSM 16087 / CCUG 44356 / LMG 19182 / AMMD) (Burkholderia cepacia (strain AMMD)).